The primary structure comprises 674 residues: tRNA 5-methylaminomethyl-2-thiouridine biosynthesis bifunctional protein MnmC (674 aa).

The tRNA (mnm(5)s(2)U34)-methyltransferase stretch occupies residues 1 to 248 (MAASSLPSHN…KREMCFGRYA (248 aa)). Residues 276–674 (IGAGLAGATV…AIRHWRSGKR (399 aa)) are FAD-dependent cmnm(5)s(2)U34 oxidoreductase.

It in the N-terminal section; belongs to the methyltransferase superfamily. tRNA (mnm(5)s(2)U34)-methyltransferase family. The protein in the C-terminal section; belongs to the DAO family. The cofactor is FAD.

Its subcellular location is the cytoplasm. It carries out the reaction 5-aminomethyl-2-thiouridine(34) in tRNA + S-adenosyl-L-methionine = 5-methylaminomethyl-2-thiouridine(34) in tRNA + S-adenosyl-L-homocysteine + H(+). Catalyzes the last two steps in the biosynthesis of 5-methylaminomethyl-2-thiouridine (mnm(5)s(2)U) at the wobble position (U34) in tRNA. Catalyzes the FAD-dependent demodification of cmnm(5)s(2)U34 to nm(5)s(2)U34, followed by the transfer of a methyl group from S-adenosyl-L-methionine to nm(5)s(2)U34, to form mnm(5)s(2)U34. This Hydrogenovibrio crunogenus (strain DSM 25203 / XCL-2) (Thiomicrospira crunogena) protein is tRNA 5-methylaminomethyl-2-thiouridine biosynthesis bifunctional protein MnmC.